Reading from the N-terminus, the 2109-residue chain is Nonribosomal peptide synthetase sidE (2109 aa).

Residues 31-512 (LTPPSPPCLV…QNGKVDFRAI (482 aa)) are adenylation 1. One can recognise a Carrier 1 domain in the interval 537–613 (AGLSETASKI…EIADTVQLDS (77 aa)). O-(pantetheine 4'-phosphoryl)serine is present on S574. The condensation 1 stretch occupies residues 646-908 (DAYPVTALQE…LAVVPYAIAI (263 aa)). Residues 1058–1555 (RTLNGQFEAT…GKANRKQLKA (498 aa)) form an adenylation 2 region. The Carrier 2 domain maps to 1584–1660 (PLASETQKVL…AMADQLKGES (77 aa)). O-(pantetheine 4'-phosphoryl)serine is present on S1621. The condensation 2 stretch occupies residues 1695–1968 (YPCPPGQAEF…NFLPMRSKVD (274 aa)).

This sequence belongs to the NRP synthetase family.

It functions in the pathway siderophore biosynthesis. Its function is as follows. Nonribosomal peptide synthetase; part of the siderophore biosynthetic pathway. Aspergillus fumigatus produces four types of siderophores, low-molecular-mass iron chelators, including excreted fusarinine C (FsC) and triacetylfusarinine C (TAFC) for iron uptake and intacellular ferricrocin (FC) for hyphal and hydroxyferricrocin (HFC) for conidial iron distribution and storage. TAFC consists of three N(2)-acetyl-N(5)-anhydromevalonyl-N(5)-hydroxyornithine residues cyclically linked by ester bonds; FC is a cyclic hexapeptide with the structure Gly-Ser-Gly-(N(5)-acetyl-N(5)-hydroxyornithine)x3. The biosynthesis of all four siderophores depends on the hydroxylation of ornithine, catalyzed by the monooxygenase sidA. Subsequently, the pathways for biosynthesis of extra- and intracellular siderophores split. For biosynthesis of extracellular siderophores, the transacylase sidF transfers anhydromevalonyl to N(5)-hydroxyornithine. The required anhydromevalonyl-CoA moiety is derived from mevalonate by CoA ligation and dehydration catalyzed by sidI and sidH respectively. The acetylation of N(5)-hydroxyornithine for FC biosynthesis involves the constitutively expressed sidL. FC is hydroxylated to HFC by an as yet uncharacterized enzyme during conidiation. Assembly of fusarinine C (FsC) and FC is catalyzed by two different nonribosomal peptide synthetases (NRPS), sidD and sidC respectively. Subsequently, sidG catalyzes N2-acetylation of FsC for forming TAFC. Both extra- and intracellular siderophores are crucial for growth during iron limitation and virulence. The polypeptide is Nonribosomal peptide synthetase sidE (Aspergillus fumigatus (strain ATCC MYA-4609 / CBS 101355 / FGSC A1100 / Af293) (Neosartorya fumigata)).